We begin with the raw amino-acid sequence, 1611 residues long: DNA (cytosine-5)-methyltransferase 1 (1611 aa).

Positions 1–120 (MPARTAPARV…SQTSGEDCRV (120 aa)) are interaction with DMAP1. The segment at 1–148 (MPARTAPARV…RRSKSDGETK (148 aa)) is interaction with DNMT3A. Interaction with the PRC2/EED-EZH2 complex stretches follow at residues 1–334 (MPAR…TEKK) and 306–603 (KPQV…TIRQ). S15 is modified (phosphoserine). One can recognise a DMAP1-binding domain in the interval 16 to 109 (RAFSLPDDVR…SREANGCLEN (94 aa)). K70 bears the N6,N6-dimethyllysine; by EHMT2 mark. A disordered region spans residues 123 to 328 (AEKGKPPKPV…EEKRRRTTYR (206 aa)). Position 133 is a phosphoserine (S133). Residue T137 is modified to Phosphothreonine. The residue at position 141 (S141) is a Phosphoserine. An N6-methyllysine; by SETD7 modification is found at K142. The residue at position 143 (S143) is a Phosphoserine; by PKB/AKT1. Residues 149 to 216 (SEVSSSPRIT…TSRERVAGLL (68 aa)) are interaction with DNMT3B. Phosphoserine occurs at positions 152 and 154. Residue K160 is modified to N6-acetyllysine. The interval 163–174 (RQTTITSHFPRG) is interaction with PCNA. The span at 163–174 (RQTTITSHFPRG) shows a compositional bias: low complexity. At T166 the chain carries Phosphothreonine. The short motif at 177–204 (KRKPEEEPEKVKSDDSVDEEKDQEEKRR) is the Nuclear localization signal element. 5 stretches are compositionally biased toward basic and acidic residues: residues 178 to 191 (RKPE…KSDD), 199 to 212 (QEEK…RERV), 220 to 265 (EPGR…RDVR), 279 to 311 (KDEK…QVSD), and 319 to 328 (EEKRRRTTYR). K188 is subject to N6-acetyllysine. An N6-acetyllysine; alternate modification is found at K257. K257 participates in a covalent cross-link: Glycyl lysine isopeptide (Lys-Gly) (interchain with G-Cter in SUMO2); alternate. At S310 the chain carries Phosphoserine. Residues 329-548 (ELTEKKMTRT…NLNRFTEDSL (220 aa)) form a DNA replication foci-targeting sequence region. Zn(2+)-binding residues include C351 and C354. Phosphoserine is present on residues S392 and S396. Residues C412 and H416 each contribute to the Zn(2+) site. S507 and S547 each carry phosphoserine. A disordered region spans residues 594–614 (RAERRQTIRQPAKEKDKGPTK). A CXXC-type zinc finger spans residues 643 to 689 (NAFKRRRCGVCEICQQPECGKCKACKDMVKFGGSGRSKQACQKRRCP). Zn(2+)-binding residues include C650, C653, C656, C661, C664, C667, C683, and C688. The autoinhibitory linker stretch occupies residues 690 to 751 (NMAMKEADDD…SYYKKVCIDS (62 aa)). Positions 695–726 (EADDDEEVDDNIPEMPSPKKMHQGKKKKQNKN) are disordered. The span at 696–706 (ADDDEEVDDNI) shows a compositional bias: acidic residues. S711 carries the phosphoserine modification. The span at 713–725 (KKMHQGKKKKQNK) shows a compositional bias: basic residues. Phosphoserine is present on S729. At K746 the chain carries N6-acetyllysine. The BAH 1 domain maps to 752-877 (ETLEVGDCVS…QDYARFESPP (126 aa)). S875 carries the post-translational modification Phosphoserine. K888, K954, K958, K972, and K1051 each carry N6-acetyllysine. Positions 969-1097 (HYRKYSDYIK…AKSKSFEDPP (129 aa)) constitute a BAH 2 domain. Residues 1091–1126 (KSFEDPPNHARSTGNKGKGKGKGKNRTKSQTCEPSE) form a disordered region. 4 repeat units span residues 1106-1107 (KG), 1108-1109 (KG), 1110-1111 (KG), and 1112-1113 (KG). The interval 1106–1115 (KGKGKGKGKN) is 5 X 2 AA tandem repeats of K-G. Positions 1107-1117 (GKGKGKGKNRT) are enriched in basic residues. Residues K1108, K1110, K1112, K1114, and K1118 each carry the N6-acetyllysine modification. The stretch at 1114–1115 (KN) is one 5; approximate repeat. The interval 1118 to 1611 (KSQTCEPSEL…AKIKEEAAKD (494 aa)) is interaction with the PRC2/EED-EZH2 complex. In terms of domain architecture, SAM-dependent MTase C5-type spans 1136–1595 (LRTLDVFSGC…LEIKRCMLAK (460 aa)). A catalytic region spans residues 1136 to 1611 (LRTLDVFSGC…AKIKEEAAKD (476 aa)). Residues S1143, 1147 to 1148 (GL), 1165 to 1166 (EM), 1187 to 1188 (DC), and C1188 contribute to the S-adenosyl-L-methionine site. C1223 is a catalytic residue. K1346 and K1412 each carry N6-acetyllysine. S-adenosyl-L-methionine contacts are provided by N1574 and V1576. Residue K1605 forms a Glycyl lysine isopeptide (Lys-Gly) (interchain with G-Cter in SUMO2) linkage.

This sequence belongs to the class I-like SAM-binding methyltransferase superfamily. C5-methyltransferase family. Homodimer. Forms a stable complex with E2F1, BB1 and HDAC1. Forms a complex with DMAP1 and HDAC2, with direct interaction. Interacts with the PRC2/EED-EZH2 complex. Probably part of a corepressor complex containing ZNF304, TRIM28, SETDB1 and DNMT1. Interacts with UHRF1; promoting its recruitment to hemimethylated DNA. Interacts with USP7, promoting its deubiquitination. Interacts with PCNA. Interacts with MBD2 and MBD3. Interacts with DNMT3A and DNMT3B. Interacts with UBC9. Interacts with CSNK1D. Interacts with HDAC1. Interacts with BAZ2A/TIP5. Interacts with SIRT7. Interacts with ZNF263; recruited to the SIX3 promoter along with other proteins involved in chromatin modification and transcriptional corepression where it contributes to transcriptional repression. Interacts with L3MBTL3 and DCAF5; the interaction requires DNMT1 methylation at Lys-142 and is necessary to target DNMT1 for ubiquitination by the CRL4-DCAF5 E3 ubiquitin ligase complex and proteasomal degradation. Interacts with PHF20L1; the interaction requires DNMT1 methylation at Lys-142 and protects DNMT1 from ubiquitination and proteasomal degradation. Post-translationally, sumoylated; sumoylation increases activity. Acetylation on multiple lysines, mainly by KAT2B/PCAF, regulates cell cycle G(2)/M transition. Deacetylation of Lys-1346 and Lys-1412 by SIRT1 increases methyltransferase activity. In terms of processing, phosphorylation of Ser-154 by CDKs is important for enzymatic activity and protein stability. Phosphorylation of Ser-143 by AKT1 prevents methylation by SETD7 thereby increasing DNMT1 stability. Post-translationally, methylation at Lys-142 by SETD7 is necessary for the regulation of DNMT1 proteasomal degradation. Ubiquitinated by UHRF1; interaction with USP7 counteracts ubiquitination by UHRF1 by promoting deubiquitination and preventing degradation by the proteasome.

The protein resides in the nucleus. The catalysed reaction is a 2'-deoxycytidine in DNA + S-adenosyl-L-methionine = a 5-methyl-2'-deoxycytidine in DNA + S-adenosyl-L-homocysteine + H(+). Functionally, methylates CpG residues. Preferentially methylates hemimethylated DNA. Associates with DNA replication sites in S phase maintaining the methylation pattern in the newly synthesized strand, that is essential for epigenetic inheritance. Associates with chromatin during G2 and M phases to maintain DNA methylation independently of replication. It is responsible for maintaining methylation patterns established in development. DNA methylation is coordinated with methylation of histones. Mediates transcriptional repression by direct binding to HDAC2. In association with DNMT3B and via the recruitment of CTCFL/BORIS, involved in activation of BAG1 gene expression by modulating dimethylation of promoter histone H3 at H3K4 and H3K9. Probably forms a corepressor complex required for activated KRAS-mediated promoter hypermethylation and transcriptional silencing of tumor suppressor genes (TSGs) or other tumor-related genes in colorectal cancer (CRC) cells. Also required to maintain a transcriptionally repressive state of genes in undifferentiated embryonic stem cells (ESCs). Associates at promoter regions of tumor suppressor genes (TSGs) leading to their gene silencing. Promotes tumor growth. The polypeptide is DNA (cytosine-5)-methyltransferase 1 (DNMT1) (Bos taurus (Bovine)).